A 268-amino-acid chain; its full sequence is MVTNKSYRERSDTSSSPVTRRLFHLMEQKQSNLCASVDVRTTKELLSLVDKLGPYICLVKTHIDIIDDFSYEETILPLLELSKKHKFMIFEDRKFADIGNTVKHQYTGGVYKIAKWADLTNAHGVTGEGVVKGLKEGAQETTDEARGLLMLAELSSKGSLAYGEYSKKTIDIAKTDKDFVMGFIAQNYMGGTDEGFDWVIMTPGVGLDDKGDNLGQQYRTVDEVISKGTDVIIVGRGLFGKGRDPVVEGKRYKEAGWNAYLKRVAAGR.

Substrate is bound by residues Asp-38, 60 to 62 (KTH), 92 to 101 (DRKFADIGNT), Tyr-218, and Arg-236. Lys-94 functions as the Proton donor in the catalytic mechanism.

This sequence belongs to the OMP decarboxylase family.

The catalysed reaction is orotidine 5'-phosphate + H(+) = UMP + CO2. It participates in pyrimidine metabolism; UMP biosynthesis via de novo pathway; UMP from orotate: step 2/2. The protein is Orotidine 5'-phosphate decarboxylase (URA3) of Candida parapsilosis (Yeast).